A 171-amino-acid chain; its full sequence is Flavodoxin (171 aa).

The Flavodoxin-like domain occupies 4 to 166 (IGLFVGTTTG…RIKEWVKQLK (163 aa)).

It belongs to the flavodoxin family. FMN serves as cofactor.

In terms of biological role, low-potential electron donor to a number of redox enzymes. The chain is Flavodoxin (fld) from Trichodesmium erythraeum (strain IMS101).